A 366-amino-acid polypeptide reads, in one-letter code: Transcription factor IIIA (366 aa).

C2H2-type zinc fingers lie at residues 35–59, 65–89, 95–120, 127–151, 157–181, 184–210, 214–236, 243–268, and 274–298; these read YICS…LCKH, FPCK…SLTH, FTCD…NRFH, YVCH…QFSH, YECP…EKVH, YPCK…AECH, AVCD…QKTH, YLCP…QSFH, and FVCE…SVVH. A Phosphoserine; by CK2 modification is found at Ser-38. Basic and acidic residues predominate over residues 299-310; it reads DPEKRKLKEKCP. The disordered stretch occupies residues 299-366; that stretch reads DPEKRKLKEK…SLVLDKLTIQ (68 aa). Residue Ser-336 is modified to Phosphoserine; by CK2; in vitro.

Post-translationally, the N-terminus is blocked. In terms of tissue distribution, synthesized in oocytes and, in much lower levels, in somatic cells.

The protein resides in the nucleus. Functionally, involved in ribosomal large subunit biogenesis. Acts both as a positive transcription factor for 5S RNA genes, and as a specific RNA binding protein that complexes with 5S RNA in oocytes to form the 7S ribonucleoprotein storage particle. May play an essential role in the developmental change in 5S RNA gene expression. Interacts with the internal control region (ICR) of approximately 50 bases within the 5S RNA genes, is required for correct transcription of these genes by RNA polymerase III. Also binds the transcribed 5S RNA's. The polypeptide is Transcription factor IIIA (gtf3a) (Xenopus laevis (African clawed frog)).